The chain runs to 488 residues: Adenylosuccinate synthetase 1, chloroplastic (488 aa).

A chloroplast-targeting transit peptide spans 1–47 (MSLSTVNHAAAAAAAAAGPGKSFSAAAPAAPSVRLPRTRAPAAAAVS). GTP-binding positions include 75–81 (GDEGKGK) and 103–105 (GHT). Residue D76 is the Proton acceptor of the active site. Mg(2+)-binding residues include D76 and G103. IMP-binding positions include 76 to 79 (DEGK), 101 to 104 (NAGH), T193, R207, Q287, T302, and R366. H104 serves as the catalytic Proton donor. 362–368 (TTTGRPR) contacts substrate. Residues R368, 394–396 (KLD), and 477–479 (GVG) each bind GTP.

The protein belongs to the adenylosuccinate synthetase family. As to quaternary structure, homodimer. It depends on Mg(2+) as a cofactor.

It localises to the plastid. It is found in the chloroplast. It carries out the reaction IMP + L-aspartate + GTP = N(6)-(1,2-dicarboxyethyl)-AMP + GDP + phosphate + 2 H(+). The protein operates within purine metabolism; AMP biosynthesis via de novo pathway; AMP from IMP: step 1/2. Plays an important role in the de novo pathway and in the salvage pathway of purine nucleotide biosynthesis. Catalyzes the first committed step in the biosynthesis of AMP from IMP. The chain is Adenylosuccinate synthetase 1, chloroplastic from Oryza sativa subsp. japonica (Rice).